Consider the following 149-residue polypeptide: MSSEAKMVDISQKETVLREAEAEGFIKLKNDTIKRIIENEIEKGNVITVAKTAGIMAAKKTSELLPLCHLIPLENVDIDIKIENSGIRVRSKVKAHYKTGVEMEALVATSISLLTIWDMVKKYEKDENGKYPYTMIDDIKVIDKIKEKD.

Substrate contacts are provided by residues 67–69 (LCH) and 103–104 (ME). The active site involves aspartate 118.

It belongs to the MoaC family. Homohexamer; trimer of dimers.

The catalysed reaction is (8S)-3',8-cyclo-7,8-dihydroguanosine 5'-triphosphate = cyclic pyranopterin phosphate + diphosphate. The protein operates within cofactor biosynthesis; molybdopterin biosynthesis. Catalyzes the conversion of (8S)-3',8-cyclo-7,8-dihydroguanosine 5'-triphosphate to cyclic pyranopterin monophosphate (cPMP). This Saccharolobus solfataricus (strain ATCC 35092 / DSM 1617 / JCM 11322 / P2) (Sulfolobus solfataricus) protein is Probable cyclic pyranopterin monophosphate synthase.